The sequence spans 510 residues: MTTPVVALVGRPNVGKSTLFNRLTRTRDALVADFPGLTRDRKYGQANIAGYDFIVIDTGGIDGTEEGVEEKMAEQSLLAIEEADVVLFLVDARAGLTSADIGIANYLRQRQNKITVVVANKTDGIDADSHCAEFYQLGLGEVEQIAASQGRGVSALMEQVLAPIAEKMNAESPEQSAVENTDVSETGEQDEWDHDFDFANEEDTALLDDAIAEELEAQDKNIKIAIVGRPNVGKSTLTNRILGEDRVVVYDLPGTTRDSIYIPMERDGQHYTIIDTAGVRKRGKVHLAVEKFSVIKTLQAIQDANVVLLTIDAREGVSDQDLSLLGFILNAGRSLVIVVNKWDGLNQDIKDQVKSELDRRLDFIDFARVHFISALHGSGVGNLFDSIQEAYACATQKMTTSMLTRILQMATDEHQPPMMGGRRIKLKYAHPGGYNPPIIVVHGNQMDKLPDSYKRYLSNYYRRSLKIIGSPIRLLFQEGNNPFAGKRNKLTPNQLRKRKRLMKFIKKSKR.

EngA-type G domains are found at residues 4-168 and 222-395; these read PVVA…AEKM and IKIA…ACAT. GTP-binding positions include 10–17, 57–61, 120–123, 228–235, 275–279, and 340–343; these read GRPNVGKS, DTGGI, NKTD, DTAGV, and NKWD. The KH-like domain occupies 396–480; that stretch reads QKMTTSMLTR…PIRLLFQEGN (85 aa).

Belongs to the TRAFAC class TrmE-Era-EngA-EngB-Septin-like GTPase superfamily. EngA (Der) GTPase family. Associates with the 50S ribosomal subunit.

Functionally, GTPase that plays an essential role in the late steps of ribosome biogenesis. This chain is GTPase Der, found in Pasteurella multocida (strain Pm70).